Reading from the N-terminus, the 248-residue chain is UPF0736 protein BCG9842_B4111 (248 aa).

This sequence belongs to the UPF0736 family.

This is UPF0736 protein BCG9842_B4111 from Bacillus cereus (strain G9842).